The sequence spans 166 residues: Small ribosomal subunit protein uS5 (166 aa).

The S5 DRBM domain occupies 12 to 75 (YIEKLVQVNR…EAARRNMIQV (64 aa)).

It belongs to the universal ribosomal protein uS5 family. In terms of assembly, part of the 30S ribosomal subunit. Contacts proteins S4 and S8.

In terms of biological role, with S4 and S12 plays an important role in translational accuracy. Its function is as follows. Located at the back of the 30S subunit body where it stabilizes the conformation of the head with respect to the body. In Azotobacter vinelandii (strain DJ / ATCC BAA-1303), this protein is Small ribosomal subunit protein uS5.